The following is a 129-amino-acid chain: SOSS complex subunit C homolog (129 aa).

The interval 105–129 (RLEPLPSPATTPTTPNAPPSHSISK) is disordered.

The protein belongs to the SOSS-C family.

The protein is SOSS complex subunit C homolog of Drosophila simulans (Fruit fly).